Here is a 341-residue protein sequence, read N- to C-terminus: Cathepsin B-like cysteine proteinase 1 (341 aa).

The N-terminal stretch at 1–19 (MKYLFFALCLYLYQGISEA) is a signal peptide. Residues 20–88 (EVPAEQIPLE…VEDEELEENN (69 aa)) constitute a propeptide, activation peptide. N-linked (GlcNAc...) asparagine glycosylation is present at Asn-103. 6 disulfide bridges follow: Cys-104–Cys-133, Cys-116–Cys-160, Cys-152–Cys-218, Cys-153–Cys-156, Cys-189–Cys-222, and Cys-197–Cys-209. Residue Cys-119 is part of the active site. An N-linked (GlcNAc...) asparagine glycan is attached at Asn-202. Active-site residues include His-288 and Asn-308.

This sequence belongs to the peptidase C1 family.

Functionally, expression of the protease correlates with blood-feeding and suggests a role for the protease in blood digestion. The chain is Cathepsin B-like cysteine proteinase 1 (CP-1) from Ostertagia ostertagi (Brown stomach worm).